The sequence spans 320 residues: N-acetylneuraminate lyase (320 aa).

Aceneuramate contacts are provided by T51 and T52. Y143 functions as the Proton donor in the catalytic mechanism. K173 serves as the catalytic Schiff-base intermediate with substrate. Aceneuramate contacts are provided by S175, G199, D201, E202, and S218.

The protein belongs to the DapA family. NanA subfamily. As to quaternary structure, homotetramer.

The protein resides in the cytoplasm. It catalyses the reaction aceneuramate = aldehydo-N-acetyl-D-mannosamine + pyruvate. It participates in amino-sugar metabolism; N-acetylneuraminate degradation. Catalyzes the cleavage of N-acetylneuraminic acid (sialic acid) to form pyruvate and N-acetylmannosamine via a Schiff base intermediate. It prevents sialic acids from being recycled and returning to the cell surface. Involved in the N-glycolylneuraminic acid (Neu5Gc) degradation pathway. In Pongo abelii (Sumatran orangutan), this protein is N-acetylneuraminate lyase.